A 566-amino-acid polypeptide reads, in one-letter code: Arginine--tRNA ligase (566 aa).

A 'HIGH' region motif is present at residues 121–131; it reads ANPNGPFHIGH.

It belongs to the class-I aminoacyl-tRNA synthetase family.

The protein localises to the cytoplasm. It catalyses the reaction tRNA(Arg) + L-arginine + ATP = L-arginyl-tRNA(Arg) + AMP + diphosphate. This chain is Arginine--tRNA ligase, found in Methanococcus maripaludis (strain DSM 14266 / JCM 13030 / NBRC 101832 / S2 / LL).